The chain runs to 266 residues: Thiazole synthase (266 aa).

Lys-95 acts as the Schiff-base intermediate with DXP in catalysis. Residues Gly-156, 182–183, and 204–205 contribute to the 1-deoxy-D-xylulose 5-phosphate site; these read AG and NT.

The protein belongs to the ThiG family. As to quaternary structure, homotetramer. Forms heterodimers with either ThiH or ThiS.

It is found in the cytoplasm. It carries out the reaction [ThiS sulfur-carrier protein]-C-terminal-Gly-aminoethanethioate + 2-iminoacetate + 1-deoxy-D-xylulose 5-phosphate = [ThiS sulfur-carrier protein]-C-terminal Gly-Gly + 2-[(2R,5Z)-2-carboxy-4-methylthiazol-5(2H)-ylidene]ethyl phosphate + 2 H2O + H(+). It functions in the pathway cofactor biosynthesis; thiamine diphosphate biosynthesis. Functionally, catalyzes the rearrangement of 1-deoxy-D-xylulose 5-phosphate (DXP) to produce the thiazole phosphate moiety of thiamine. Sulfur is provided by the thiocarboxylate moiety of the carrier protein ThiS. In vitro, sulfur can be provided by H(2)S. This chain is Thiazole synthase, found in Shewanella denitrificans (strain OS217 / ATCC BAA-1090 / DSM 15013).